A 382-amino-acid polypeptide reads, in one-letter code: Bifunctional enzyme IspD/IspF (382 aa).

The tract at residues 1-226 (MTLAVLIVAA…RSTMDNIPDI (226 aa)) is 2-C-methyl-D-erythritol 4-phosphate cytidylyltransferase. The 2-C-methyl-D-erythritol 2,4-cyclodiphosphate synthase stretch occupies residues 227–382 (RLGNGYDVHR…ALATATLVRA (156 aa)). A divalent metal cation is bound by residues Asp233 and His235. 4-CDP-2-C-methyl-D-erythritol 2-phosphate is bound by residues 233-235 (DVH) and 259-260 (HS). Position 267 (His267) interacts with a divalent metal cation. Residues 281–283 (DIG), 357–360 (TTSE), Phe364, and Arg367 each bind 4-CDP-2-C-methyl-D-erythritol 2-phosphate.

This sequence in the N-terminal section; belongs to the IspD/TarI cytidylyltransferase family. IspD subfamily. In the C-terminal section; belongs to the IspF family. A divalent metal cation serves as cofactor.

It carries out the reaction 2-C-methyl-D-erythritol 4-phosphate + CTP + H(+) = 4-CDP-2-C-methyl-D-erythritol + diphosphate. It catalyses the reaction 4-CDP-2-C-methyl-D-erythritol 2-phosphate = 2-C-methyl-D-erythritol 2,4-cyclic diphosphate + CMP. It participates in isoprenoid biosynthesis; isopentenyl diphosphate biosynthesis via DXP pathway; isopentenyl diphosphate from 1-deoxy-D-xylulose 5-phosphate: step 2/6. Its pathway is isoprenoid biosynthesis; isopentenyl diphosphate biosynthesis via DXP pathway; isopentenyl diphosphate from 1-deoxy-D-xylulose 5-phosphate: step 4/6. Functionally, bifunctional enzyme that catalyzes the formation of 4-diphosphocytidyl-2-C-methyl-D-erythritol from CTP and 2-C-methyl-D-erythritol 4-phosphate (MEP) (IspD), and catalyzes the conversion of 4-diphosphocytidyl-2-C-methyl-D-erythritol 2-phosphate (CDP-ME2P) to 2-C-methyl-D-erythritol 2,4-cyclodiphosphate (ME-CPP) with a corresponding release of cytidine 5-monophosphate (CMP) (IspF). This chain is Bifunctional enzyme IspD/IspF, found in Ruegeria sp. (strain TM1040) (Silicibacter sp.).